Here is a 182-residue protein sequence, read N- to C-terminus: uncharacterized protein (182 aa).

A signal peptide spans 1 to 29 (MKKLLKKLVVLFLSSLVIIFNVWYFIICA). The chain crosses the membrane as a helical span at residues 152 to 174 (WNLYFWTAASYNAVIFVFVLVIV).

It localises to the membrane. This is an uncharacterized protein from Bacillus subtilis (strain 168).